A 522-amino-acid chain; its full sequence is Nuclear pore glycoprotein p62 (522 aa).

Serine 2 carries the post-translational modification N-acetylserine. Tandem repeats lie at residues 6–7, 44–45, 76–77, 114–115, and 142–143. The 5 X 2 AA repeats of F-G stretch occupies residues 6-143; the sequence is FGGTGAPTGG…GTAPTGFVFG (138 aa). A compositionally biased stretch (polar residues) spans 169 to 179; it reads SGFNIGSAGNS. Disordered stretches follow at residues 169-215 and 260-288; these read SGFN…ATIT and APGA…SSTT. Composition is skewed to low complexity over residues 180–215 and 262–288; these read AQPT…ATIT and GAAS…SSTT. Positions 328–458 are required for centrosome localization; that stretch reads MTYAQLESLI…QDLKDIIEHL (131 aa). The stretch at 328–458 forms a coiled coil; it reads MTYAQLESLI…QDLKDIIEHL (131 aa). The O-linked (GlcNAc) threonine glycan is linked to threonine 373. Residues serine 408 and serine 418 each carry the phosphoserine modification. Residue serine 468 is glycosylated (O-linked (GlcNAc) serine).

The protein belongs to the nucleoporin NSP1/NUP62 family. Component of the p62 complex, a complex at least composed of NUP62, NUP54, and NUP58. Interacts with NUP88. Interacts with NUTF2. Interacts with HIKESHI. Interacts with OSBPL8. Interacts with CAPG. Interacts with SAS6 and TUBG1 at the centrosome. Interacts with MCM3AP isoform GANP. In terms of assembly, (Microbial infection) Interacts with Epstein-barr virus BGLF4; this interaction allows BGLF4 nuclear entry. O-glycosylated. Contains about 10 N-acetylglucosamine side chain sites predicted for the entire protein, among which only one in the C-terminal. In terms of processing, the inner channel of the NPC has a different redox environment from the cytoplasm and allows the formation of interchain disulfide bonds between some nucleoporins, the significant increase of these linkages upon oxidative stress reduces the permeability of the NPC.

Its subcellular location is the nucleus. The protein resides in the nuclear pore complex. The protein localises to the cytoplasm. It is found in the cytoskeleton. It localises to the spindle pole. Its subcellular location is the nucleus envelope. The protein resides in the microtubule organizing center. The protein localises to the centrosome. In terms of biological role, essential component of the nuclear pore complex. The N-terminal is probably involved in nucleocytoplasmic transport. The C-terminal is involved in protein-protein interaction probably via coiled-coil formation, promotes its association with centrosomes and may function in anchorage of p62 to the pore complex. Plays a role in mitotic cell cycle progression by regulating centrosome segregation, centriole maturation and spindle orientation. It might be involved in protein recruitment to the centrosome after nuclear breakdown. The sequence is that of Nuclear pore glycoprotein p62 (NUP62) from Homo sapiens (Human).